A 102-amino-acid chain; its full sequence is Large ribosomal subunit protein bL21 (102 aa).

This sequence belongs to the bacterial ribosomal protein bL21 family. In terms of assembly, part of the 50S ribosomal subunit. Contacts protein L20.

In terms of biological role, this protein binds to 23S rRNA in the presence of protein L20. The sequence is that of Large ribosomal subunit protein bL21 from Myxococcus xanthus (strain DK1622).